The chain runs to 79 residues: uncharacterized protein (79 aa).

This sequence belongs to the asfivirus D79L family.

This is an uncharacterized protein from African swine fever virus (strain Badajoz 1971 Vero-adapted) (Ba71V).